Here is a 198-residue protein sequence, read N- to C-terminus: Recombination protein RecR (198 aa).

The C4-type zinc finger occupies Cys57–Cys72. The region spanning Thr80–Pro175 is the Toprim domain.

This sequence belongs to the RecR family.

May play a role in DNA repair. It seems to be involved in an RecBC-independent recombinational process of DNA repair. It may act with RecF and RecO. This chain is Recombination protein RecR, found in Geobacillus kaustophilus (strain HTA426).